The sequence spans 400 residues: Chalcone synthase 7 (400 aa).

Cys168 is an active-site residue.

It belongs to the thiolase-like superfamily. Chalcone/stilbene synthases family.

The catalysed reaction is (E)-4-coumaroyl-CoA + 3 malonyl-CoA + 3 H(+) = 2',4,4',6'-tetrahydroxychalcone + 3 CO2 + 4 CoA. It functions in the pathway secondary metabolite biosynthesis; flavonoid biosynthesis. Its function is as follows. The primary product of this enzyme is 4,2',4',6'-tetrahydroxychalcone (also termed naringenin-chalcone or chalcone) which can under specific conditions spontaneously isomerize into naringenin. The chain is Chalcone synthase 7 (CHS7) from Sorghum bicolor (Sorghum).